The primary structure comprises 199 residues: Small ribosomal subunit protein eS1 (199 aa).

It belongs to the eukaryotic ribosomal protein eS1 family.

The protein is Small ribosomal subunit protein eS1 of Pyrococcus abyssi (strain GE5 / Orsay).